Here is a 405-residue protein sequence, read N- to C-terminus: Protein held out wings (405 aa).

Residues 142–210 enclose the KH domain; that stretch reads YVPVREHPDF…HLSDDLHVLI (69 aa).

Homodimer. Interacts with Sxl; promoting nuclear retention of msl-2 transcripts. As to expression, during embryogenesis, expression is seen in mesodermal precursors of somatic, visceral and pharyngeal muscle. Later in embryogenesis, expression is restricted to heart and muscle attachment sites of the epidermis. During onset of metamorphosis, expression is seen in muscle and muscle attachment cells.

It localises to the nucleus. Its function is as follows. RNA-binding protein involved in muscle development and dosage compensation. Vital role in steroid regulation of muscle development and to control heart rate. Required during embryogenesis, in late stages of somatic muscle development, for myotube migration and during metamorphosis for muscle reorganization. Required for integrin-mediated cell-adhesion in wing blade. Together with Sxl, acts as an inhibitor of dosage compensation in females by preventing production of msl-2 protein, an essential component of the MSL complex. Specifically binds to the 5'-UTR of msl-2 transcripts and cooperates with Sxl to promote nuclear retention of msl-2 mRNAs. In Drosophila melanogaster (Fruit fly), this protein is Protein held out wings (how).